A 602-amino-acid polypeptide reads, in one-letter code: uncharacterized protein (602 aa).

Residues 51–210 (QYLGTQPRDF…PFVSYQPDAD (160 aa)) enclose the Helicase ATP-binding domain. The span at 430–439 (PHRESAHDPL) shows a compositional bias: basic and acidic residues. Disordered regions lie at residues 430-452 (PHRESAHDPLDGDPATRTQTERG) and 518-538 (RAQLQKGATQPATSGASASVH). Positions 523–534 (KGATQPATSGAS) are enriched in polar residues.

It to M.leprae ML1624.

This is an uncharacterized protein from Mycobacterium tuberculosis (strain CDC 1551 / Oshkosh).